The primary structure comprises 28 residues: Conotoxin Cal6.43b (28 aa).

Disulfide bonds link C3-C13, C7-C19, and C12-C25.

As to expression, expressed by the venom duct.

The protein localises to the secreted. Functionally, probable neurotoxin with unknown target. Possibly targets ion channels. This Californiconus californicus (California cone) protein is Conotoxin Cal6.43b.